Consider the following 186-residue polypeptide: Putative manganese efflux pump MntP (186 aa).

6 helical membrane passes run 3–23 (PIALLLLAFAMSTDAFAAAIG), 39–59 (IGIIFGSIEAITPLVGWLIGK), 65–85 (VEAWDHWIAFSLLTVLGLHMI), 109–129 (CLTAFSTSIDAMAVGVSLAFI), 133–153 (IWIASALIGLATTLMVTIGIM), and 166–186 (AEIFGGLTLIAVGAWILYGQL).

This sequence belongs to the MntP (TC 9.B.29) family.

It is found in the cell inner membrane. Probably functions as a manganese efflux pump. This chain is Putative manganese efflux pump MntP, found in Alcanivorax borkumensis (strain ATCC 700651 / DSM 11573 / NCIMB 13689 / SK2).